A 274-amino-acid chain; its full sequence is Prothoracicostatic peptide (274 aa).

The first 19 residues, 1–19, serve as a signal peptide directing secretion; it reads MRWCLFALWVFGVATVVTA. Residues 20-67 constitute a propeptide that is removed on maturation; that stretch reads AEEPHHDAAPQTDNEVDLTEDDKRAWSSLHSGWAKRAWQDMSSAWGKR. The residue at position 76 (W76) is a Tryptophan amide. Residues 77 to 91 constitute a propeptide that is removed on maturation; sequence GKRGWQDLNSAWGKR. W100 carries the post-translational modification Tryptophan amide. Positions 101-136 are excised as a propeptide; it reads GKRGWQDLNSAWGKRDDDEAMEKKSWQDLNSVWGKR. Residue W145 is modified to Tryptophan amide. Positions 146–148 are excised as a propeptide; the sequence is GKR. Residue W157 is modified to Tryptophan amide. The propeptide occupies 158–172; that stretch reads GKRGWNDISSVWGKR. A Tryptophan amide modification is found at W181. The propeptide occupies 182–274; the sequence is GKRAWQDMSS…NEHSATTNEA (93 aa).

It localises to the secreted. Its function is as follows. Inhibits ecdysteroid biosynthesis in the prothoracic gland of fifth instar larvae, with maximum inhibition during the spinning stage. When administered to day 8 fifth instar larvae it produces a significant delay in the commencement spinning behavior. The sequence is that of Prothoracicostatic peptide from Bombyx mori (Silk moth).